Reading from the N-terminus, the 147-residue chain is Large ribosomal subunit protein uL22 (147 aa).

Residues 110–147 form a disordered region; it reads EEKKTVAKKAPAAKKTTTTKAPAKKTTSTKKATAKKES. Residues 117–140 are compositionally biased toward low complexity; that stretch reads KKAPAAKKTTTTKAPAKKTTSTKK.

The protein belongs to the universal ribosomal protein uL22 family. As to quaternary structure, part of the 50S ribosomal subunit.

In terms of biological role, this protein binds specifically to 23S rRNA; its binding is stimulated by other ribosomal proteins, e.g. L4, L17, and L20. It is important during the early stages of 50S assembly. It makes multiple contacts with different domains of the 23S rRNA in the assembled 50S subunit and ribosome. Functionally, the globular domain of the protein is located near the polypeptide exit tunnel on the outside of the subunit, while an extended beta-hairpin is found that lines the wall of the exit tunnel in the center of the 70S ribosome. The polypeptide is Large ribosomal subunit protein uL22 (Campylobacter jejuni subsp. jejuni serotype O:23/36 (strain 81-176)).